A 160-amino-acid polypeptide reads, in one-letter code: Crossover junction endodeoxyribonuclease RuvC (160 aa).

Residues Asp-9, Glu-68, and Asp-141 contribute to the active site. Asp-9, Glu-68, and Asp-141 together coordinate Mg(2+).

Belongs to the RuvC family. As to quaternary structure, homodimer which binds Holliday junction (HJ) DNA. The HJ becomes 2-fold symmetrical on binding to RuvC with unstacked arms; it has a different conformation from HJ DNA in complex with RuvA. In the full resolvosome a probable DNA-RuvA(4)-RuvB(12)-RuvC(2) complex forms which resolves the HJ. The cofactor is Mg(2+).

The protein localises to the cytoplasm. It catalyses the reaction Endonucleolytic cleavage at a junction such as a reciprocal single-stranded crossover between two homologous DNA duplexes (Holliday junction).. The RuvA-RuvB-RuvC complex processes Holliday junction (HJ) DNA during genetic recombination and DNA repair. Endonuclease that resolves HJ intermediates. Cleaves cruciform DNA by making single-stranded nicks across the HJ at symmetrical positions within the homologous arms, yielding a 5'-phosphate and a 3'-hydroxyl group; requires a central core of homology in the junction. The consensus cleavage sequence is 5'-(A/T)TT(C/G)-3'. Cleavage occurs on the 3'-side of the TT dinucleotide at the point of strand exchange. HJ branch migration catalyzed by RuvA-RuvB allows RuvC to scan DNA until it finds its consensus sequence, where it cleaves and resolves the cruciform DNA. This Campylobacter jejuni (strain RM1221) protein is Crossover junction endodeoxyribonuclease RuvC.